The chain runs to 338 residues: GTPase Obg (338 aa).

Residues 1-159 (MKFVDSASVF…FTLDLELKLM (159 aa)) enclose the Obg domain. The interval 123 to 145 (GGRGNQHFATSTHQAPRHAEPGQ) is disordered. The OBG-type G domain occupies 160–323 (ADVGLVGFPN…LKDALWRIIV (164 aa)). Residues 166–173 (GFPNAGKS), 191–195 (FTTLV), 213–216 (DIPG), 280–283 (TKMD), and 304–306 (SAV) contribute to the GTP site. The Mg(2+) site is built by S173 and T193.

Belongs to the TRAFAC class OBG-HflX-like GTPase superfamily. OBG GTPase family. As to quaternary structure, monomer. Requires Mg(2+) as cofactor.

The protein localises to the cytoplasm. Its function is as follows. An essential GTPase which binds GTP, GDP and possibly (p)ppGpp with moderate affinity, with high nucleotide exchange rates and a fairly low GTP hydrolysis rate. Plays a role in control of the cell cycle, stress response, ribosome biogenesis and in those bacteria that undergo differentiation, in morphogenesis control. The polypeptide is GTPase Obg (Chlorobium chlorochromatii (strain CaD3)).